The sequence spans 191 residues: Elongation factor P 1 (191 aa).

Belongs to the elongation factor P family.

It localises to the cytoplasm. It functions in the pathway protein biosynthesis; polypeptide chain elongation. Involved in peptide bond synthesis. Stimulates efficient translation and peptide-bond synthesis on native or reconstituted 70S ribosomes in vitro. Probably functions indirectly by altering the affinity of the ribosome for aminoacyl-tRNA, thus increasing their reactivity as acceptors for peptidyl transferase. In Lactobacillus acidophilus (strain ATCC 700396 / NCK56 / N2 / NCFM), this protein is Elongation factor P 1.